The sequence spans 967 residues: Isoleucine--tRNA ligase (967 aa).

The 'HIGH' region signature appears at 68 to 78 (PYANGTLHMGH). Position 583 (E583) interacts with L-isoleucyl-5'-AMP. Residues 624-628 (KMSKS) carry the 'KMSKS' region motif. Residue K627 participates in ATP binding. Zn(2+)-binding residues include C937, C940, C957, and C960.

Belongs to the class-I aminoacyl-tRNA synthetase family. IleS type 1 subfamily. Monomer. It depends on Zn(2+) as a cofactor.

Its subcellular location is the cytoplasm. It catalyses the reaction tRNA(Ile) + L-isoleucine + ATP = L-isoleucyl-tRNA(Ile) + AMP + diphosphate. Its function is as follows. Catalyzes the attachment of isoleucine to tRNA(Ile). As IleRS can inadvertently accommodate and process structurally similar amino acids such as valine, to avoid such errors it has two additional distinct tRNA(Ile)-dependent editing activities. One activity is designated as 'pretransfer' editing and involves the hydrolysis of activated Val-AMP. The other activity is designated 'posttransfer' editing and involves deacylation of mischarged Val-tRNA(Ile). The sequence is that of Isoleucine--tRNA ligase from Prochlorococcus marinus (strain NATL1A).